A 357-amino-acid polypeptide reads, in one-letter code: Phosphoribosylformylglycinamidine cyclo-ligase (357 aa).

The protein belongs to the AIR synthase family.

Its subcellular location is the cytoplasm. The enzyme catalyses 2-formamido-N(1)-(5-O-phospho-beta-D-ribosyl)acetamidine + ATP = 5-amino-1-(5-phospho-beta-D-ribosyl)imidazole + ADP + phosphate + H(+). The protein operates within purine metabolism; IMP biosynthesis via de novo pathway; 5-amino-1-(5-phospho-D-ribosyl)imidazole from N(2)-formyl-N(1)-(5-phospho-D-ribosyl)glycinamide: step 2/2. This Agrobacterium fabrum (strain C58 / ATCC 33970) (Agrobacterium tumefaciens (strain C58)) protein is Phosphoribosylformylglycinamidine cyclo-ligase.